The primary structure comprises 283 residues: Elongation factor Ts (283 aa).

Positions 80–83 (TDFV) are involved in Mg(2+) ion dislocation from EF-Tu.

It belongs to the EF-Ts family.

The protein localises to the cytoplasm. Its function is as follows. Associates with the EF-Tu.GDP complex and induces the exchange of GDP to GTP. It remains bound to the aminoacyl-tRNA.EF-Tu.GTP complex up to the GTP hydrolysis stage on the ribosome. This chain is Elongation factor Ts, found in Haemophilus influenzae (strain PittGG).